The sequence spans 321 residues: L-carnitine dehydrogenase (321 aa).

An NAD(+)-binding site is contributed by 14-19 (GSGVIG).

It belongs to the 3-hydroxyacyl-CoA dehydrogenase family. L-carnitine dehydrogenase subfamily. Homodimer.

Its subcellular location is the cytoplasm. It carries out the reaction carnitine + NAD(+) = 3-dehydrocarnitine + NADH + H(+). It participates in amine and polyamine metabolism; carnitine metabolism. With respect to regulation, analogs of L-carnitine such as D-carnitine, glycine betaine and choline, are competitive inhibitors of L-carnitine oxidation. Catalyzes the NAD(+)-dependent oxidation of L-carnitine to 3-dehydrocarnitine. Is specific for L-carnitine and NAD(+) as substrates. D,L-3-hydroxybutyrate, L-lactate, ethanol, L-malate and D,L-isocitrate are not substrates. Is involved in a L-carnitine degradation pathway that allows P.aeruginosa to grow on L-carnitine as the sole source of carbon and nitrogen. This is L-carnitine dehydrogenase from Pseudomonas aeruginosa (strain ATCC 15692 / DSM 22644 / CIP 104116 / JCM 14847 / LMG 12228 / 1C / PRS 101 / PAO1).